Reading from the N-terminus, the 1107-residue chain is Unconventional myosin-Ie (1107 aa).

Residues 19–692 enclose the Myosin motor domain; the sequence is SGVDDMVLLS…SLFLLEEMRE (674 aa). 112–119 lines the ATP pocket; that stretch reads GESGAGKT. The segment at 581–591 is actin-binding; that stretch reads PHYIRCIKPNE. The 30-residue stretch at 695 to 724 folds into the IQ domain; that stretch reads YDGYARVIQKTWRKFVARKKYVQMREDASD. The TH1 domain maps to 730–922; it reads KERRRNSINR…NKVLQVSIGP (193 aa). The interval 920-1052 is disordered; the sequence is IGPGLPKNAR…KPQPKPKPQV (133 aa). Composition is skewed to polar residues over residues 933-949, 977-989, and 998-1012; these read RNTVSSRGYSGGTNNNY, SGNQRSNQKSLYT, and RQQSTGSDRLSQTPE. Ser1001 bears the Phosphoserine mark. Pro residues predominate over residues 1034–1051; the sequence is RPPPAGGRPKPQPKPKPQ. Residues 1050–1107 form the SH3 domain; it reads PQVPQCKALYAYDAQDTDELSFNANDVIDIIKEDPSGWWTGRLRGKQGLFPNNYVTKI.

The protein belongs to the TRAFAC class myosin-kinesin ATPase superfamily. Myosin family. Interacts with CALM and F-actin. Interacts (via SH3 domain) with SYNJ1, DNM1 and DNM2. Interacts with ARL14EP. Interacts with CARMIL1. In terms of tissue distribution, detected in brain stem, brain cortex, cerebellum, stomach, colon, heart, lung, liver, spleen and kidney. Detected in utricle, cochlea, outer hair cell bundle cuticular plate and vestibular epithelia (at protein level). Detected in cochlea and vestibular tissues. Detected in kidney, lung, spleen and intestine.

The protein localises to the cytoplasm. Its subcellular location is the cytoskeleton. It localises to the cytoplasmic vesicle. It is found in the clathrin-coated vesicle. The protein resides in the cell junction. Functionally, myosins are actin-based motor molecules with ATPase activity. Unconventional myosins serve in intracellular movements. Their highly divergent tails bind to membranous compartments, which are then moved relative to actin filaments. Binds to membranes containing anionic phospholipids via its tail domain. Involved in clathrin-mediated endocytosis and intracellular movement of clathrin-coated vesicles. Required for normal morphology of the glomerular basement membrane, normal development of foot processes by kidney podocytes and normal kidney function. In dendritic cells, may control the movement of class II-containing cytoplasmic vesicles along the actin cytoskeleton by connecting them with the actin network via ARL14EP and ARL14. In Rattus norvegicus (Rat), this protein is Unconventional myosin-Ie (Myo1e).